Consider the following 205-residue polypeptide: Transcription antitermination protein NusB (205 aa).

Belongs to the NusB family.

Involved in transcription antitermination. Required for transcription of ribosomal RNA (rRNA) genes. Binds specifically to the boxA antiterminator sequence of the ribosomal RNA (rrn) operons. This is Transcription antitermination protein NusB from Acaryochloris marina (strain MBIC 11017).